Reading from the N-terminus, the 444-residue chain is Ribosomal protein uS12 methylthiotransferase RimO (444 aa).

The region spanning 6–116 is the MTTase N-terminal domain; the sequence is PNIGFVSLGC…VMEHVHKYVP (111 aa). Cys15, Cys51, Cys80, Cys148, Cys152, and Cys155 together coordinate [4Fe-4S] cluster. In terms of domain architecture, Radical SAM core spans 134–375; that stretch reads LTPKHYAYLK…MQLQQEISAA (242 aa). Positions 378–444 constitute a TRAM domain; it reads QQKIGKTWKV…ADEYDLWGTC (67 aa).

Belongs to the methylthiotransferase family. RimO subfamily. [4Fe-4S] cluster is required as a cofactor.

It is found in the cytoplasm. It carries out the reaction L-aspartate(89)-[ribosomal protein uS12]-hydrogen + (sulfur carrier)-SH + AH2 + 2 S-adenosyl-L-methionine = 3-methylsulfanyl-L-aspartate(89)-[ribosomal protein uS12]-hydrogen + (sulfur carrier)-H + 5'-deoxyadenosine + L-methionine + A + S-adenosyl-L-homocysteine + 2 H(+). Functionally, catalyzes the methylthiolation of an aspartic acid residue of ribosomal protein uS12. The sequence is that of Ribosomal protein uS12 methylthiotransferase RimO from Actinobacillus succinogenes (strain ATCC 55618 / DSM 22257 / CCUG 43843 / 130Z).